The primary structure comprises 421 residues: Gamma-glutamyl phosphate reductase (421 aa).

This sequence belongs to the gamma-glutamyl phosphate reductase family.

The protein localises to the cytoplasm. It carries out the reaction L-glutamate 5-semialdehyde + phosphate + NADP(+) = L-glutamyl 5-phosphate + NADPH + H(+). It functions in the pathway amino-acid biosynthesis; L-proline biosynthesis; L-glutamate 5-semialdehyde from L-glutamate: step 2/2. Catalyzes the NADPH-dependent reduction of L-glutamate 5-phosphate into L-glutamate 5-semialdehyde and phosphate. The product spontaneously undergoes cyclization to form 1-pyrroline-5-carboxylate. The protein is Gamma-glutamyl phosphate reductase of Leptospira biflexa serovar Patoc (strain Patoc 1 / ATCC 23582 / Paris).